The following is a 327-amino-acid chain: Probable cell division protein WhiA (327 aa).

Positions Ser275–Lys308 form a DNA-binding region, H-T-H motif. Residues Lys306 to Ala327 form a disordered region.

The protein belongs to the WhiA family.

Its function is as follows. Involved in cell division and chromosome segregation. In Rhodococcus jostii (strain RHA1), this protein is Probable cell division protein WhiA.